The chain runs to 760 residues: Protein HEADING DATE 3B (760 aa).

Gly residues-rich tracts occupy residues 1 to 12 (MATRGGGGGGGG) and 60 to 70 (SGGGGGGGVGG). Disordered stretches follow at residues 1 to 120 (MATR…KINK), 144 to 169 (SRST…RLAD), 236 to 262 (VKSR…EKSS), and 285 to 346 (TGII…IEET). The segment covering 71 to 87 (SPAHSTSAASQSQSQSQ) has biased composition (low complexity). Residues 94-107 (SLFQPFNVPSNRPG) are compositionally biased toward polar residues. Positions 108-120 (HSTEKINSDKINK) are enriched in basic and acidic residues. A compositionally biased stretch (basic and acidic residues) spans 236–248 (VKSRTPLKDKEME). Residues 349-355 (KRKRLLE) carry the Nuclear localization signal motif. 2 disordered regions span residues 485–543 (LQQP…GVQL) and 707–760 (FPTV…QRDD). 3 stretches are compositionally biased toward polar residues: residues 511 to 522 (QRDQAATNGVSK), 531 to 543 (ASDN…GVQL), and 707 to 730 (FPTV…QTNV).

As to expression, expressed in mesophyll cells of young leaves, anthers, stigmas and the top of lemmas.

It is found in the nucleus. Functionally, involved in the regulation of flowering time under short day (SD) and long day (LD) conditions. Functions as a floral promoter by negatively regulating GHD7, a repressor of the photoperiodic control of flowering. Acts as a floral activator in the LD photoperiodic pathway. Involved in blue light-induced activation of EHD1 expression to promote flowering under SD conditions. This Oryza sativa subsp. japonica (Rice) protein is Protein HEADING DATE 3B (HD3B).